The primary structure comprises 423 residues: MSSRVFRATPDNNYLVPRRSKDQQDTSPDRNRIWSEPRLKPVVNRKVPVVYYLCRNGQLDHPHFIEVTLSSHDGLYLKDVINRLNDLRGKGMASLYSWSSKRSYKNGFVWHDLSEDDFIFPVQGQEYVLKGSEVLDSCLISNPRSLLETSSFRDPRSLNPDKNSGDDIPAVINRRRNQSWSSIDLSEYKVYKATESSAESTQRLAADASTQTDDRRRRRRPAKEEIEEVKSPASYENQSTELSRDEISPPPSDSSPETLENLIKADGRLILRPSESSTDHRTVESLSSGRMRASAVLMQLISCGTMSFKECGPVLLKDQGLALNGRSGCTITRGAEDNGEERVDKELKSFGRVQLEDKEYFSGSLIETKKELVPALKRSSSYNADRCSRMGPTTEKDEEEAVRAKCIPRKPKPVAKRNNGGQQ.

The segment at methionine 1–isoleucine 33 is disordered. A compositionally biased stretch (basic and acidic residues) spans arginine 19–isoleucine 33. The segment at arginine 45–aspartate 136 is DIX-like oligomerization domain. 2 disordered regions span residues serine 150 to isoleucine 172 and serine 196 to threonine 258. Residues serine 196–glutamine 211 are compositionally biased toward polar residues. Short sequence motifs (association to cell membranes) lie at residues alanine 233 to serine 234 and cysteine 303 to glycine 304. The tract at residues serine 379–glutamine 423 is disordered. Basic residues predominate over residues cysteine 406–alanine 415.

This sequence belongs to the SOSEKI family. In terms of assembly, homodimer. Forms long polymer filaments with other SOKs proteins polymers (e.g. SOK1, SOK2, SOK3 and SOK4) crucial for polar localization and biological activity. Binds to ANGUSTIFOLIA (AN). As to expression, expressed during embryogenesis and in roots.

Its subcellular location is the cell membrane. Its function is as follows. SOSEKI proteins (SOK1-5) locally interpret global polarity cues and can influence cell division orientation to coordinate cell polarization relative to body axes. The protein is Protein SOSEKI 5 of Arabidopsis thaliana (Mouse-ear cress).